Consider the following 496-residue polypeptide: Probable G-protein coupled receptor K01A12.3 (496 aa).

Topologically, residues 1 to 19 (MESVTRHRADMISFFTFDS) are extracellular. The helical transmembrane segment at 20 to 40 (YISIVGVAYTAVGLLGVFCNV) threads the bilayer. Residues 41–58 (TTVIMILTNRVFRLSAYT) lie on the Cytoplasmic side of the membrane. The helical transmembrane segment at 59–79 (IMANVALADSIVMLIAGVACG) threads the bilayer. Residues 80-128 (MDVMWPNPNDLTSFIPSLEEPYQKIAPVSLRNDSKTDSSAAGFETGNIH) are Extracellular-facing. An N-linked (GlcNAc...) asparagine glycan is attached at Asn-111. A helical membrane pass occupies residues 129–149 (AVLSFSFVAAWTAGVISYAML). The Cytoplasmic portion of the chain corresponds to 150–169 (GTNRCIAICYYGTKARALNQ). Residues 170-190 (VSVAVACSASTWIVGIAAALV) form a helical membrane-spanning segment. Over 191–216 (GTLSQPMIGIQRTMWSISFLEPRPHT) the chain is Extracellular. The helical transmembrane segment at 217-237 (TLFFTLLCAANLLGLGAQWVC) threads the bilayer. Residues 238–285 (STLVLLKIRQVKKKISKNKLNQNSANRFRKQVILALNEIIVTGNFKAR) lie on the Cytoplasmic side of the membrane. The chain crosses the membrane as a helical span at residues 286–306 (LTFQFFYPSILCTISTFLFFI). Residues 307–318 (KPYAFEYLSGWQ) are Extracellular-facing. The chain crosses the membrane as a helical span at residues 319–339 (LVILHLLWLCNHTCNPFIYAY). At 340 to 496 (FNDRMRLTYK…WVKFAKKASI (157 aa)) the chain is on the cytoplasmic side. The segment at 451–470 (TKELESAHNQGGSSRFDSER) is disordered.

Belongs to the G-protein coupled receptor 1 family.

It localises to the cell membrane. The sequence is that of Probable G-protein coupled receptor K01A12.3 from Caenorhabditis elegans.